The sequence spans 325 residues: Apoptosis-enhancing nuclease (325 aa).

Residues 27–35 (RKRHKRRSR) carry the Nucleolar localization signal motif. A disordered region spans residues 85–105 (RAGSGSAPCSRRPAPGKASGP). The Exonuclease domain maps to 110–266 (CVAIDCEMVG…EDATTAMELY (157 aa)). The short motif at 165–188 (RQHMRKAVPFQVAQKEILKLLKGK) is the Nuclear localization signal element. The tract at residues 281–325 (LWTCPEDREPDSSTDMEQYMEDQYWPDDLAHGSRGGAREAQDRRN) is disordered. Basic and acidic residues predominate over residues 308-325 (DLAHGSRGGAREAQDRRN).

Its subcellular location is the nucleus. The protein resides in the nucleolus. Its function is as follows. Exonuclease with activity against single- and double-stranded DNA and RNA. Mediates p53-induced apoptosis. When induced by p53 following DNA damage, digests double-stranded DNA to form single-stranded DNA and amplifies DNA damage signals, leading to enhancement of apoptosis. The chain is Apoptosis-enhancing nuclease (AEN) from Homo sapiens (Human).